Reading from the N-terminus, the 284-residue chain is Pseudopaline exporter CntI (284 aa).

Transmembrane regions (helical) follow at residues 2–22, 34–54, 74–94, 96–116, 122–142, 147–167, 179–199, 209–229, 236–256, and 259–279; these read VLDLLKSGVLLAVLASFTFSV, LPAAEIVFFRSAIGTLLIYLL, GVMGALYLVCYFYAIAHIPLA, ASILAHMSPFFVILFSALFLG, AVYWLLLVVVLGALMIVKPFS, SVYAVVGLLSAVFAAGASVAI, IVFYFLAVATLVAIPLMWSDF, GLLLAIGVVSLLGQVFLTRAF, IVAVTRYIGIVFNAGWGWLFW, and VPDALTIAGGVLIVVACIALS. EamA domains lie at 8–138 and 151–279; these read SGVL…LMIV and VVGL…IALS.

The protein belongs to the EamA transporter family.

It is found in the cell inner membrane. Functionally, transports the metallophore pseudopaline, which is involved in the acquisition of nickel and zinc, and thus enables bacterial growth inside the host, where metal access is limited. Is probably involved in the export of pseudopaline. In Pseudomonas aeruginosa (strain UCBPP-PA14), this protein is Pseudopaline exporter CntI.